Reading from the N-terminus, the 332-residue chain is Endo-1,4-beta-xylanase B (332 aa).

The GH10 domain occupies 2–331 (STEIPSLSAS…KDSFWRIIGQ (330 aa)). Catalysis depends on Glu-134, which acts as the Proton donor. The active-site Nucleophile is the Glu-241.

This sequence belongs to the glycosyl hydrolase 10 (cellulase F) family. Cytoplasmic xylanase subfamily.

Its subcellular location is the cytoplasm. The enzyme catalyses Endohydrolysis of (1-&gt;4)-beta-D-xylosidic linkages in xylans.. Its pathway is glycan degradation; xylan degradation. Its activity is regulated as follows. Completely inhibited by Ag(2+), Cu(2+), Hg(2+), Mn(2+), Pb(2+) and Sn(2+). Strongly inhibited by Fe(2+) and Zn(2+). Co(2+) and Ni(2+) cause little inhibition while Ca(2+) and Mg(2+) do not affect enzyme activity, and Ba(2+) produces a small stimulating effect. Irreversibly inactivated by SDS in vitro. In terms of biological role, plays a role in plant xylan biodegradation, probably via the hydrolysis of short xylooligosaccharides resulting from extracellular xylan hydrolysis, once they have been transported inside cells. Shows similar activity on xylans of different rate of arabinose or methylglucuronic substitution. Also displays high activity on aryl-xylosides. Is active on xylotetraose and xylotriose, but does not hydrolyze xylobiose, indicating that XynB is a xylanase and not a beta-xylosidase. This is Endo-1,4-beta-xylanase B (xynB) from Paenibacillus barcinonensis.